Consider the following 160-residue polypeptide: MSGHGAPEIDPTALDGTGLAVTVVAGRWHDEISAGLLAGAQRVLDAAGVTTTVIRVPGSFELPVVARAALDAGADAVVALGVIIRGGTPHFEYVSDAATSGLTQASLLTGKPVGFGLLTLDDEQQGLDRAGLPDSKEDKGAEAAEAAVTTALLLKAIRGA.

5-amino-6-(D-ribitylamino)uracil contacts are provided by residues W28, 59-61 (SFE), and 82-84 (VII). 87–88 (GT) provides a ligand contact to (2S)-2-hydroxy-3-oxobutyl phosphate. H90 functions as the Proton donor in the catalytic mechanism. F115 is a binding site for 5-amino-6-(D-ribitylamino)uracil. R129 contacts (2S)-2-hydroxy-3-oxobutyl phosphate.

The protein belongs to the DMRL synthase family.

It catalyses the reaction (2S)-2-hydroxy-3-oxobutyl phosphate + 5-amino-6-(D-ribitylamino)uracil = 6,7-dimethyl-8-(1-D-ribityl)lumazine + phosphate + 2 H2O + H(+). The protein operates within cofactor biosynthesis; riboflavin biosynthesis; riboflavin from 2-hydroxy-3-oxobutyl phosphate and 5-amino-6-(D-ribitylamino)uracil: step 1/2. Catalyzes the formation of 6,7-dimethyl-8-ribityllumazine by condensation of 5-amino-6-(D-ribitylamino)uracil with 3,4-dihydroxy-2-butanone 4-phosphate. This is the penultimate step in the biosynthesis of riboflavin. This Clavibacter sepedonicus (Clavibacter michiganensis subsp. sepedonicus) protein is 6,7-dimethyl-8-ribityllumazine synthase.